A 156-amino-acid chain; its full sequence is Translationally controlled tumor protein 2 (156 aa).

Residues 1–156 (MLVYQDILTG…LAYGLKEIKC (156 aa)) enclose the TCTP domain.

Belongs to the TCTP family. In terms of tissue distribution, expressed in stems, cauline leaves, minor veins of rosette leaves, roots, lateral root primordia, vascular tissues of petioles and inflorescences, base of siliques, papillae and ovules. Not detected in root meristems, anthers or seeds. Expressed in stomata, trichomes and root cortex.

It localises to the nucleus. Its subcellular location is the cytoplasm. Regulates proliferation. Induces whole plant regeneration when expressed in heterologous systems. Involved in root growth and lateral root development, with a probable role in cell reprogramming. The long-distance transport of TCTP RNA and/or protein in plants may have an important role in regulation of growth and development. The polypeptide is Translationally controlled tumor protein 2 (Arabidopsis thaliana (Mouse-ear cress)).